A 371-amino-acid chain; its full sequence is Protein STRICTOSIDINE SYNTHASE-LIKE 6 (371 aa).

An N-terminal signal peptide occupies residues 1 to 21 (MPVFLSSRFLFFCIIVPLLIS). Asn-101 and Asn-137 each carry an N-linked (GlcNAc...) asparagine glycan. Tyr-303 is subject to Phosphotyrosine.

This sequence belongs to the strictosidine synthase family.

It is found in the vacuole. The protein is Protein STRICTOSIDINE SYNTHASE-LIKE 6 of Arabidopsis thaliana (Mouse-ear cress).